Reading from the N-terminus, the 398-residue chain is Exodeoxyribonuclease 7 large subunit (398 aa).

The protein belongs to the XseA family. Heterooligomer composed of large and small subunits.

Its subcellular location is the cytoplasm. The enzyme catalyses Exonucleolytic cleavage in either 5'- to 3'- or 3'- to 5'-direction to yield nucleoside 5'-phosphates.. Its function is as follows. Bidirectionally degrades single-stranded DNA into large acid-insoluble oligonucleotides, which are then degraded further into small acid-soluble oligonucleotides. This is Exodeoxyribonuclease 7 large subunit from Chlorobaculum tepidum (strain ATCC 49652 / DSM 12025 / NBRC 103806 / TLS) (Chlorobium tepidum).